Here is a 302-residue protein sequence, read N- to C-terminus: N(G),N(G)-dimethylarginine dimethylaminohydrolase (302 aa).

3 residues coordinate substrate: Asp102, Arg127, and Arg172. The active-site Proton donor is the His201. Residue Cys295 is the Nucleophile of the active site.

It belongs to the DDAH family.

The catalysed reaction is N(omega),N(omega)-dimethyl-L-arginine + H2O = dimethylamine + L-citrulline. The enzyme catalyses N(omega)-methyl-L-arginine + H2O = L-citrulline + methylamine. In terms of biological role, hydrolyzes N(G),N(G)-dimethyl-L-arginine (ADMA) and N(G)-monomethyl-L-arginine (MMA). In Mycobacterium tuberculosis (strain ATCC 25618 / H37Rv), this protein is N(G),N(G)-dimethylarginine dimethylaminohydrolase.